Here is a 449-residue protein sequence, read N- to C-terminus: Biotin carboxylase (449 aa).

The Biotin carboxylation domain maps to 1 to 445 (MLDKIVIANR…NIHYLEKKLG (445 aa)). Residues Lys-116, Lys-159, 165-166 (GG), 201-204 (EKYL), His-209, and His-236 contribute to the ATP site. Positions 120–317 (IAAMKKAGVP…LIKEQLRIAA (198 aa)) constitute an ATP-grasp domain. Residue Lys-238 coordinates hydrogencarbonate. Glu-276 and Glu-288 together coordinate ATP. Mg(2+)-binding residues include Glu-276, Glu-288, and Asn-290. Residues Glu-276, Glu-288, and Asn-290 each contribute to the Mn(2+) site. Residues Arg-292, Val-295, and Arg-338 each contribute to the hydrogencarbonate site. Arg-292 is an active-site residue. Arg-338 serves as a coordination point for biotin.

Acetyl-CoA carboxylase is a heterohexamer of biotin carboxyl carrier protein, biotin carboxylase and the two subunits of carboxyl transferase in a 2:2 complex. Mg(2+) serves as cofactor. The cofactor is Mn(2+).

It catalyses the reaction N(6)-biotinyl-L-lysyl-[protein] + hydrogencarbonate + ATP = N(6)-carboxybiotinyl-L-lysyl-[protein] + ADP + phosphate + H(+). Its pathway is lipid metabolism; malonyl-CoA biosynthesis; malonyl-CoA from acetyl-CoA: step 1/1. Functionally, this protein is a component of the acetyl coenzyme A carboxylase complex; first, biotin carboxylase catalyzes the carboxylation of the carrier protein and then the transcarboxylase transfers the carboxyl group to form malonyl-CoA. In Escherichia coli O157:H7, this protein is Biotin carboxylase (accC).